The primary structure comprises 366 residues: Beta sliding clamp (366 aa).

It belongs to the beta sliding clamp family. In terms of assembly, forms a ring-shaped head-to-tail homodimer around DNA which binds and tethers DNA polymerases and other proteins to the DNA. The DNA replisome complex has a single clamp-loading complex (3 tau and 1 each of delta, delta', psi and chi subunits) which binds 3 Pol III cores (1 core on the leading strand and 2 on the lagging strand) each with a beta sliding clamp dimer. Additional proteins in the replisome are other copies of gamma, psi and chi, Ssb, DNA helicase and RNA primase.

Its subcellular location is the cytoplasm. In terms of biological role, confers DNA tethering and processivity to DNA polymerases and other proteins. Acts as a clamp, forming a ring around DNA (a reaction catalyzed by the clamp-loading complex) which diffuses in an ATP-independent manner freely and bidirectionally along dsDNA. Initially characterized for its ability to contact the catalytic subunit of DNA polymerase III (Pol III), a complex, multichain enzyme responsible for most of the replicative synthesis in bacteria; Pol III exhibits 3'-5' exonuclease proofreading activity. The beta chain is required for initiation of replication as well as for processivity of DNA replication. This Vibrio cholerae serotype O1 (strain ATCC 39315 / El Tor Inaba N16961) protein is Beta sliding clamp (dnaN).